Here is a 518-residue protein sequence, read N- to C-terminus: UDP-N-acetylmuramate--L-alanine ligase (518 aa).

An ATP-binding site is contributed by Gly-158–Thr-164.

Belongs to the MurCDEF family.

The protein resides in the cytoplasm. It catalyses the reaction UDP-N-acetyl-alpha-D-muramate + L-alanine + ATP = UDP-N-acetyl-alpha-D-muramoyl-L-alanine + ADP + phosphate + H(+). It participates in cell wall biogenesis; peptidoglycan biosynthesis. Functionally, cell wall formation. In Crocosphaera subtropica (strain ATCC 51142 / BH68) (Cyanothece sp. (strain ATCC 51142)), this protein is UDP-N-acetylmuramate--L-alanine ligase.